Consider the following 141-residue polypeptide: Putative antiporter subunit mnhB2 (141 aa).

4 helical membrane-spanning segments follow: residues 10-30, 35-55, 70-90, and 116-136; these read SVTK…FFAG, GGGF…FLAF, KLMI…MFFG, and LFEL…MLSI.

This sequence belongs to the CPA3 antiporters (TC 2.A.63) subunit B family. As to quaternary structure, may form a heterooligomeric complex that consists of seven subunits: mnhA2, mnhB2, mnhC2, mnhD2, mnhE2, mnhF2 and mnhG2.

Its subcellular location is the cell membrane. In Staphylococcus epidermidis (strain ATCC 35984 / DSM 28319 / BCRC 17069 / CCUG 31568 / BM 3577 / RP62A), this protein is Putative antiporter subunit mnhB2 (mnhB2).